A 446-amino-acid chain; its full sequence is CBL-interacting serine/threonine-protein kinase 24 (446 aa).

A Protein kinase domain is found at 11-264 (YEVGRTIGEG…IQGIKKDPWF (254 aa)). ATP is bound by residues 17-25 (IGEGTFAKV) and K40. D134 serves as the catalytic Proton acceptor. The interval 152 to 179 (DFGLSALPQEGVELLRTTCGTPNYVAPE) is activation loop. At S156 the chain carries Phosphoserine. T168 bears the Phosphothreonine mark. The NAF domain maps to 305–329 (EGPLMMNAFEMITLSQGLNLSALFD). The segment at 336-365 (KRQTRFVSRREPSEIIANIEAVANSMGFKS) is PPI.

Belongs to the protein kinase superfamily. CAMK Ser/Thr protein kinase family. SNF1 subfamily. In terms of assembly, interacts with CBL1, CBL2, CBL4/SOS3, CBL5, CBL9, CBL10 and with the protein phosphatase 2C ABI2. It depends on Mn(2+) as a cofactor. Autophosphorylated.

It is found in the cytoplasm. The protein localises to the nucleus. The catalysed reaction is L-seryl-[protein] + ATP = O-phospho-L-seryl-[protein] + ADP + H(+). The enzyme catalyses L-threonyl-[protein] + ATP = O-phospho-L-threonyl-[protein] + ADP + H(+). Functionally, involved in the regulatory pathway for the control of intracellular Na(+) and K(+) homeostasis and salt tolerance. Activates the vacuolar H(+)/Ca(2+) antiporter CAX1 and operates in synergy with CBL4/SOS3 to activate the plasma membrane Na(+)/H(+) antiporter SOS1. CIPK serine-threonine protein kinases interact with CBL proteins. Binding of a CBL protein to the regulatory NAF domain of CIPK protein lead to the activation of the kinase in a calcium-dependent manner. Phosphorylates CBL1, CBL4 and CBL10. This is CBL-interacting serine/threonine-protein kinase 24 (CIPK24) from Arabidopsis thaliana (Mouse-ear cress).